Reading from the N-terminus, the 105-residue chain is MASNVTDKSFEEEVLKSDLPVLVDFWAEWCSPCRMLTPIIEEISKDLESKVKVLKMNIDENPEIPSKYGIRSIPTVMLFKNGEQKDTKVGLHQKNSLIEWINNNI.

The region spanning 1–105 (MASNVTDKSF…SLIEWINNNI (105 aa)) is the Thioredoxin domain. Cys-30 and Cys-33 are oxidised to a cystine.

This sequence belongs to the thioredoxin family.

Functionally, component of the thioredoxin-thioredoxin reductase system. Participates in various redox reactions through the reversible oxidation of its active center dithiol to a disulfide and catalyzes dithiol-disulfide exchange reactions. The polypeptide is Thioredoxin (trxA) (Rickettsia bellii (strain RML369-C)).